Reading from the N-terminus, the 346-residue chain is tRNA pseudouridine synthase D (346 aa).

The Nucleophile role is filled by Asp-83. In terms of domain architecture, TRUD spans 159 to 305 (GVPNYFGEQR…LKQERRALRV (147 aa)).

This sequence belongs to the pseudouridine synthase TruD family.

The enzyme catalyses uridine(13) in tRNA = pseudouridine(13) in tRNA. Its function is as follows. Responsible for synthesis of pseudouridine from uracil-13 in transfer RNAs. This Hydrogenovibrio crunogenus (strain DSM 25203 / XCL-2) (Thiomicrospira crunogena) protein is tRNA pseudouridine synthase D.